The chain runs to 288 residues: Phosphatidate cytidylyltransferase (288 aa).

The next 7 helical transmembrane spans lie at 10–30, 52–72, 89–109, 118–138, 152–172, 192–212, and 223–243; these read IVLIAAVLCALFLFTPFYFAL, PLIRFFVTTFLGVFIFLWLYT, LLLINAVSWWGLALLLVISYP, NPLLQLLFAFSTLIPFVAGVL, GLFLLLYVFILVWAADSGAYF, WEGVIGGLITALVLAFIFIHF, and ITGFIILSVATVAISVLGDLT.

It belongs to the CDS family.

It is found in the cell inner membrane. The catalysed reaction is a 1,2-diacyl-sn-glycero-3-phosphate + CTP + H(+) = a CDP-1,2-diacyl-sn-glycerol + diphosphate. It functions in the pathway phospholipid metabolism; CDP-diacylglycerol biosynthesis; CDP-diacylglycerol from sn-glycerol 3-phosphate: step 3/3. In Haemophilus influenzae (strain ATCC 51907 / DSM 11121 / KW20 / Rd), this protein is Phosphatidate cytidylyltransferase (cdsA).